Reading from the N-terminus, the 653-residue chain is DNA mismatch repair protein MutL (653 aa).

The segment at Gln-375–Ser-425 is disordered. Over residues Tyr-380 to Asp-389 the composition is skewed to basic and acidic residues.

It belongs to the DNA mismatch repair MutL/HexB family.

In terms of biological role, this protein is involved in the repair of mismatches in DNA. It is required for dam-dependent methyl-directed DNA mismatch repair. May act as a 'molecular matchmaker', a protein that promotes the formation of a stable complex between two or more DNA-binding proteins in an ATP-dependent manner without itself being part of a final effector complex. This is DNA mismatch repair protein MutL from Vibrio cholerae serotype O1 (strain ATCC 39541 / Classical Ogawa 395 / O395).